A 367-amino-acid polypeptide reads, in one-letter code: tRNA uridine(34) hydroxylase (367 aa).

The Rhodanese domain maps to 159–249 (EDKNSIVVDV…GIISYAHEIS (91 aa)). Catalysis depends on C213, which acts as the Cysteine persulfide intermediate.

This sequence belongs to the TrhO family.

The catalysed reaction is uridine(34) in tRNA + AH2 + O2 = 5-hydroxyuridine(34) in tRNA + A + H2O. In terms of biological role, catalyzes oxygen-dependent 5-hydroxyuridine (ho5U) modification at position 34 in tRNAs. The protein is tRNA uridine(34) hydroxylase of Leptospira borgpetersenii serovar Hardjo-bovis (strain L550).